Consider the following 577-residue polypeptide: Arginine--tRNA ligase (577 aa).

The 'HIGH' region motif lies at 122–132 (PNVAKEMHVGH).

This sequence belongs to the class-I aminoacyl-tRNA synthetase family. As to quaternary structure, monomer.

It localises to the cytoplasm. It carries out the reaction tRNA(Arg) + L-arginine + ATP = L-arginyl-tRNA(Arg) + AMP + diphosphate. The chain is Arginine--tRNA ligase from Escherichia coli O6:K15:H31 (strain 536 / UPEC).